The sequence spans 289 residues: Glyceraldehyde-3-phosphate dehydrogenase (289 aa).

NAD(+)-binding residues include Asp-12 and Arg-57. D-glyceraldehyde 3-phosphate contacts are provided by residues 128 to 130 (SCT), Thr-159, 188 to 189 (TG), and Arg-211. The Nucleophile role is filled by Cys-129.

The protein belongs to the glyceraldehyde-3-phosphate dehydrogenase family. Homotetramer.

The protein resides in the cytoplasm. It catalyses the reaction D-glyceraldehyde 3-phosphate + phosphate + NAD(+) = (2R)-3-phospho-glyceroyl phosphate + NADH + H(+). It functions in the pathway carbohydrate degradation; glycolysis; pyruvate from D-glyceraldehyde 3-phosphate: step 1/5. The protein is Glyceraldehyde-3-phosphate dehydrogenase (GPD) of Amanita muscaria (Fly agaric).